Consider the following 456-residue polypeptide: Phosphomethylpyrimidine synthase (456 aa).

Substrate contacts are provided by residues N80, M109, Y139, H175, 195–197, 236–239, and E275; these read SRG and DSLR. H279 is a binding site for Zn(2+). Residue Y302 coordinates substrate. A Zn(2+)-binding site is contributed by H343. [4Fe-4S] cluster-binding residues include C423, C426, and C431.

This sequence belongs to the ThiC family. Requires [4Fe-4S] cluster as cofactor.

It catalyses the reaction 5-amino-1-(5-phospho-beta-D-ribosyl)imidazole + S-adenosyl-L-methionine = 4-amino-2-methyl-5-(phosphooxymethyl)pyrimidine + CO + 5'-deoxyadenosine + formate + L-methionine + 3 H(+). Its pathway is cofactor biosynthesis; thiamine diphosphate biosynthesis. Functionally, catalyzes the synthesis of the hydroxymethylpyrimidine phosphate (HMP-P) moiety of thiamine from aminoimidazole ribotide (AIR) in a radical S-adenosyl-L-methionine (SAM)-dependent reaction. The protein is Phosphomethylpyrimidine synthase of Prochlorococcus marinus (strain AS9601).